We begin with the raw amino-acid sequence, 145 residues long: D-aminoacyl-tRNA deacylase (145 aa).

The short motif at 137–138 (GP) is the Gly-cisPro motif, important for rejection of L-amino acids element.

This sequence belongs to the DTD family. As to quaternary structure, homodimer.

The protein localises to the cytoplasm. It carries out the reaction glycyl-tRNA(Ala) + H2O = tRNA(Ala) + glycine + H(+). The enzyme catalyses a D-aminoacyl-tRNA + H2O = a tRNA + a D-alpha-amino acid + H(+). Functionally, an aminoacyl-tRNA editing enzyme that deacylates mischarged D-aminoacyl-tRNAs. Also deacylates mischarged glycyl-tRNA(Ala), protecting cells against glycine mischarging by AlaRS. Acts via tRNA-based rather than protein-based catalysis; rejects L-amino acids rather than detecting D-amino acids in the active site. By recycling D-aminoacyl-tRNA to D-amino acids and free tRNA molecules, this enzyme counteracts the toxicity associated with the formation of D-aminoacyl-tRNA entities in vivo and helps enforce protein L-homochirality. The sequence is that of D-aminoacyl-tRNA deacylase from Stutzerimonas stutzeri (strain A1501) (Pseudomonas stutzeri).